The sequence spans 240 residues: MKFLTPLVLSSLASAAALNRRADMCGQWDTTTTDKFTLYNNLWGEGNADSGSQCTGLDSDDGNTIAWHTSWTWTGGAGQVKSFANVAYNFEATQLSQLSSIPSTWKWENTGSDIVADVAYDLFTSSSADGDEEYEIMIWLAALGGAGPISSTGSAIATPTVGGQSWSLYSGPNGQMTVFSFVASSTTEDFSADLNDFLKYLQEEQGMPSSQYLTHVQAGTEPFSGSNVKFTTSSYSVSVA.

An N-terminal signal peptide occupies residues 1-15; sequence MKFLTPLVLSSLASA.

This sequence belongs to the glycosyl hydrolase 12 (cellulase H) family.

It is found in the secreted. The catalysed reaction is xyloglucan + H2O = xyloglucan oligosaccharides.. Its function is as follows. Catalyzes endohydrolysis of 1,4-beta-D-glucosidic linkages in xyloglucan with retention of the beta-configuration of the glycosyl residues. Specific for xyloglucan and does not hydrolyze other cell wall components. The protein is Probable xyloglucan-specific endo-beta-1,4-glucanase A (xgeA) of Aspergillus oryzae (strain ATCC 42149 / RIB 40) (Yellow koji mold).